A 412-amino-acid polypeptide reads, in one-letter code: Light-independent protochlorophyllide reductase subunit N (412 aa).

[4Fe-4S] cluster-binding residues include C17, C42, and C103.

It belongs to the BchN/ChlN family. Protochlorophyllide reductase is composed of three subunits; ChlL, ChlN and ChlB. Forms a heterotetramer of two ChlB and two ChlN subunits. [4Fe-4S] cluster serves as cofactor.

It carries out the reaction chlorophyllide a + oxidized 2[4Fe-4S]-[ferredoxin] + 2 ADP + 2 phosphate = protochlorophyllide a + reduced 2[4Fe-4S]-[ferredoxin] + 2 ATP + 2 H2O. It functions in the pathway porphyrin-containing compound metabolism; chlorophyll biosynthesis (light-independent). Functionally, component of the dark-operative protochlorophyllide reductase (DPOR) that uses Mg-ATP and reduced ferredoxin to reduce ring D of protochlorophyllide (Pchlide) to form chlorophyllide a (Chlide). This reaction is light-independent. The NB-protein (ChlN-ChlB) is the catalytic component of the complex. The protein is Light-independent protochlorophyllide reductase subunit N of Synechococcus sp. (strain CC9902).